A 120-amino-acid polypeptide reads, in one-letter code: Large ribosomal subunit protein uL18 (120 aa).

Belongs to the universal ribosomal protein uL18 family. Part of the 50S ribosomal subunit; part of the 5S rRNA/L5/L18/L25 subcomplex. Contacts the 5S and 23S rRNAs.

This is one of the proteins that bind and probably mediate the attachment of the 5S RNA into the large ribosomal subunit, where it forms part of the central protuberance. The polypeptide is Large ribosomal subunit protein uL18 (Bartonella henselae (strain ATCC 49882 / DSM 28221 / CCUG 30454 / Houston 1) (Rochalimaea henselae)).